The following is a 213-amino-acid chain: Thiamine-phosphate synthase (213 aa).

4-amino-2-methyl-5-(diphosphooxymethyl)pyrimidine contacts are provided by residues 42-46 (QYREK) and D77. Residues D78 and D97 each coordinate Mg(2+). S116 contacts 4-amino-2-methyl-5-(diphosphooxymethyl)pyrimidine. 142–144 (TIS) contacts 2-[(2R,5Z)-2-carboxy-4-methylthiazol-5(2H)-ylidene]ethyl phosphate. 4-amino-2-methyl-5-(diphosphooxymethyl)pyrimidine is bound at residue K145. 2-[(2R,5Z)-2-carboxy-4-methylthiazol-5(2H)-ylidene]ethyl phosphate contacts are provided by residues G173 and 193-194 (IS).

It belongs to the thiamine-phosphate synthase family. Mg(2+) serves as cofactor.

The catalysed reaction is 2-[(2R,5Z)-2-carboxy-4-methylthiazol-5(2H)-ylidene]ethyl phosphate + 4-amino-2-methyl-5-(diphosphooxymethyl)pyrimidine + 2 H(+) = thiamine phosphate + CO2 + diphosphate. It carries out the reaction 2-(2-carboxy-4-methylthiazol-5-yl)ethyl phosphate + 4-amino-2-methyl-5-(diphosphooxymethyl)pyrimidine + 2 H(+) = thiamine phosphate + CO2 + diphosphate. The enzyme catalyses 4-methyl-5-(2-phosphooxyethyl)-thiazole + 4-amino-2-methyl-5-(diphosphooxymethyl)pyrimidine + H(+) = thiamine phosphate + diphosphate. Its pathway is cofactor biosynthesis; thiamine diphosphate biosynthesis; thiamine phosphate from 4-amino-2-methyl-5-diphosphomethylpyrimidine and 4-methyl-5-(2-phosphoethyl)-thiazole: step 1/1. In terms of biological role, condenses 4-methyl-5-(beta-hydroxyethyl)thiazole monophosphate (THZ-P) and 2-methyl-4-amino-5-hydroxymethyl pyrimidine pyrophosphate (HMP-PP) to form thiamine monophosphate (TMP). This is Thiamine-phosphate synthase from Limosilactobacillus fermentum (strain NBRC 3956 / LMG 18251) (Lactobacillus fermentum).